We begin with the raw amino-acid sequence, 310 residues long: Protein OS-9 homolog (310 aa).

A signal peptide spans 1–40; it reads MFSSSMFPHLILPAIGSSKVRTMVLPFAFVGFFIFPICLA. 3 N-linked (GlcNAc...) asparagine glycosylation sites follow: asparagine 60, asparagine 97, and asparagine 104. An MRH domain is found at 129 to 255; the sequence is NVFLIENRGY…TIHVPGLCSL (127 aa). Residues tryptophan 139 and glutamine 151 each contribute to the a mannooligosaccharide derivative site. Asparagine 204 carries an N-linked (GlcNAc...) asparagine glycan. Disulfide bonds link cysteine 208/cysteine 241 and cysteine 223/cysteine 253. A mannooligosaccharide derivative-binding residues include aspartate 209, arginine 215, glutamate 237, and tyrosine 243. Composition is skewed to basic and acidic residues over residues 282 to 292 and 301 to 310; these read VDHKDSQHVVD and EVKEVETQSS. Positions 282–310 are disordered; it reads VDHKDSQHVVDEVAQTSPPEVKEVETQSS.

This sequence belongs to the OS-9 family. In terms of assembly, interacts with missfolded ER lumenal proteins.

It is found in the endoplasmic reticulum membrane. Lectin involved in the quality control of the secretory pathway. As a member of the endoplasmic reticulum-associated degradation lumenal (ERAD-L) surveillance system, targets misfolded endoplasmic reticulum lumenal glycoproteins for degradation. In Schizosaccharomyces pombe (strain 972 / ATCC 24843) (Fission yeast), this protein is Protein OS-9 homolog (yos9).